The chain runs to 245 residues: Octanoyltransferase (245 aa).

Residues 54 to 242 (QNAPEQVWLL…AFEQIFGPTI (189 aa)) enclose the BPL/LPL catalytic domain. Residues 93-100 (RGGEFTYH), 173-175 (AIG), and 186-188 (GVS) each bind substrate. The active-site Acyl-thioester intermediate is the C204.

Belongs to the LipB family.

The protein resides in the cytoplasm. The enzyme catalyses octanoyl-[ACP] + L-lysyl-[protein] = N(6)-octanoyl-L-lysyl-[protein] + holo-[ACP] + H(+). It participates in protein modification; protein lipoylation via endogenous pathway; protein N(6)-(lipoyl)lysine from octanoyl-[acyl-carrier-protein]: step 1/2. Its function is as follows. Catalyzes the transfer of endogenously produced octanoic acid from octanoyl-acyl-carrier-protein onto the lipoyl domains of lipoate-dependent enzymes. Lipoyl-ACP can also act as a substrate although octanoyl-ACP is likely to be the physiological substrate. The sequence is that of Octanoyltransferase from Bartonella quintana (strain Toulouse) (Rochalimaea quintana).